We begin with the raw amino-acid sequence, 496 residues long: Genome polyprotein (496 aa).

The Extracellular segment spans residues 1–447 (SRCTHLENRD…HTVLGGAFNS (447 aa)). Disulfide bonds link C3/C30, C60/C116, C60/C121, C74/C105, C92/C116, and C92/C121. Residues 98 to 111 (DRGWGNHCGLFGKG) form a fusion peptide region. N154 carries an N-linked (GlcNAc...) asparagine; by host glycan. Intrachain disulfides connect C186–C290 and C307–C338. The helical transmembrane segment at 448–468 (IFGGVGFLPKLLMGVALAWLG) threads the bilayer. The Cytoplasmic portion of the chain corresponds to 469 to 479 (LNTRNPTMSMS). The helical transmembrane segment at 480 to 496 (FLLAGGLVLAMTLGVGA) threads the bilayer.

Homodimer; in the endoplasmic reticulum and Golgi. N-glycosylated.

It is found in the virion membrane. The protein resides in the host endoplasmic reticulum membrane. Binds to host cell surface receptor and mediates fusion between viral and cellular membranes. Envelope protein is synthesized in the endoplasmic reticulum in the form of heterodimer with protein prM. They play a role in virion budding in the ER, and the newly formed immature particle is covered with 60 spikes composed of heterodimer between precursor prM and envelope protein E. The virion is transported to the Golgi apparatus where the low pH causes dissociation of PrM-E heterodimers and formation of E homodimers. prM-E cleavage is ineficient, and many virions are only partially matured. These uncleaved prM would play a role in immune evasion. This chain is Genome polyprotein, found in Bos taurus (Bovine).